The sequence spans 468 residues: uncharacterized protein (468 aa).

Positions 447–468 (AVHVSNGDKPKVALPDTQLGSH) are disordered.

Belongs to the mycobacterial PPE family.

This is an uncharacterized protein from Mycobacterium tuberculosis (strain ATCC 25618 / H37Rv).